Here is an 828-residue protein sequence, read N- to C-terminus: Isethionate sulfite-lyase (828 aa).

Residues 30–698 (ERVFTILESF…VVSATPNGRK (669 aa)) form the PFL domain. 2-hydroxyethane-1-sulfonate is bound by residues Arg187, Gln191, 466-468 (CTE), and Arg676. Cys466 (cysteine radical intermediate) is an active-site residue. Glu468 serves as the catalytic Proton acceptor. The Glycine radical domain occupies 705–828 (DGSSASHGAD…LIARTGHDVM (124 aa)). Gly803 is subject to Glycine radical.

This sequence belongs to the glycyl radical enzyme (GRE) family. In terms of assembly, homodimer. In terms of processing, requires the activating protein IseH to generate the key active site glycyl radical on Gly-803 that is involved in catalysis.

The catalysed reaction is 2-hydroxyethane-1-sulfonate = acetaldehyde + sulfite + H(+). It functions in the pathway organosulfur degradation; alkanesulfonate degradation. Its function is as follows. Involved in an anaerobic respiration pathway that converts the sulfonate isethionate (2-hydroxyethanesulfonate) to ammonia, acetate and sulfide. Catalyzes the radical-mediated C-S bond cleavage of isethionate (2-hydroxyethanesulfonate) to form sulfite and acetaldehyde. Shows no activity with taurine or ethanolamine as substrates. The sequence is that of Isethionate sulfite-lyase from Nitratidesulfovibrio vulgaris (strain ATCC 29579 / DSM 644 / CCUG 34227 / NCIMB 8303 / VKM B-1760 / Hildenborough) (Desulfovibrio vulgaris).